The chain runs to 160 residues: Crossover junction endodeoxyribonuclease RuvC (160 aa).

Catalysis depends on residues Asp-9, Glu-68, and Asp-141. Mg(2+) is bound by residues Asp-9, Glu-68, and Asp-141.

The protein belongs to the RuvC family. As to quaternary structure, homodimer which binds Holliday junction (HJ) DNA. The HJ becomes 2-fold symmetrical on binding to RuvC with unstacked arms; it has a different conformation from HJ DNA in complex with RuvA. In the full resolvosome a probable DNA-RuvA(4)-RuvB(12)-RuvC(2) complex forms which resolves the HJ. Requires Mg(2+) as cofactor.

Its subcellular location is the cytoplasm. The enzyme catalyses Endonucleolytic cleavage at a junction such as a reciprocal single-stranded crossover between two homologous DNA duplexes (Holliday junction).. In terms of biological role, the RuvA-RuvB-RuvC complex processes Holliday junction (HJ) DNA during genetic recombination and DNA repair. Endonuclease that resolves HJ intermediates. Cleaves cruciform DNA by making single-stranded nicks across the HJ at symmetrical positions within the homologous arms, yielding a 5'-phosphate and a 3'-hydroxyl group; requires a central core of homology in the junction. The consensus cleavage sequence is 5'-(A/T)TT(C/G)-3'. Cleavage occurs on the 3'-side of the TT dinucleotide at the point of strand exchange. HJ branch migration catalyzed by RuvA-RuvB allows RuvC to scan DNA until it finds its consensus sequence, where it cleaves and resolves the cruciform DNA. This Campylobacter jejuni subsp. jejuni serotype O:2 (strain ATCC 700819 / NCTC 11168) protein is Crossover junction endodeoxyribonuclease RuvC.